A 528-amino-acid chain; its full sequence is Protein spinster homolog 1 (528 aa).

The interval 1 to 38 (MAGSDTAPFLSQADDPDDGPAPGHPGLPGPMGNPKSGE) is disordered. A2 carries the post-translational modification N-acetylalanine. A run of 12 helical transmembrane segments spans residues 60–80 (LIVVVLCYINLLNYMDRFTVA), 98–118 (GLIQTVFISSYMVLAPVFGYL), 126–146 (YLMCGGIAFWSLVTLGSSFIP), 160–180 (VGVGEASYSTIAPTLIADLFV), 187–207 (MLSIFYFAIPVGSGLGYIAGS), 218–238 (WALRVTPGLGVLAVLLLFLVV), 278–298 (LGFTSVAFVTGSLALWAPAFL), 323–343 (LIFGLITCLTGVLGVGLGVEI), 357–377 (LVCAAGLLGSAPFLFLALACA), 381–401 (IVATYIFIFIGETLLSMNWAI), 421–441 (FQIVLSHLLGDAGSPYLIGLI), and 465–485 (MLCAFVGALGGAAFLGTAMFI). At S518 the chain carries Phosphoserine.

This sequence belongs to the major facilitator superfamily. Spinster (TC 2.A.1.49) family. Interacts with BCL2 and BCL2L1. In terms of tissue distribution, expressed in liver (at mRNA and protein levels).

Its subcellular location is the lysosome membrane. The catalysed reaction is a 1-acyl-sn-glycero-3-phosphocholine(out) + H(+)(out) = a 1-acyl-sn-glycero-3-phosphocholine(in) + H(+)(in). The enzyme catalyses 1-hexadecanoyl-sn-glycero-3-phosphocholine(out) + H(+)(out) = 1-hexadecanoyl-sn-glycero-3-phosphocholine(in) + H(+)(in). It catalyses the reaction 1-(9Z-octadecenoyl)-sn-glycero-3-phosphocholine(out) + H(+)(out) = 1-(9Z-octadecenoyl)-sn-glycero-3-phosphocholine(in) + H(+)(in). It carries out the reaction 1-(5Z,8Z,11Z,14Z-eicosatetraenoyl)-sn-glycero-3-phosphocholine(out) + H(+)(out) = 1-(5Z,8Z,11Z,14Z-eicosatetraenoyl)-sn-glycero-3-phosphocholine(in) + H(+)(in). The catalysed reaction is 1-(4Z,7Z,10Z,13Z,16Z,19Z-docosahexaenoyl)-sn-glycero-3-phosphocholine(out) + H(+)(out) = 1-(4Z,7Z,10Z,13Z,16Z,19Z-docosahexaenoyl)-sn-glycero-3-phosphocholine(in) + H(+)(in). The enzyme catalyses a 1-acyl-sn-glycero-3-phosphoethanolamine(out) + H(+)(out) = a 1-acyl-sn-glycero-3-phosphoethanolamine(in) + H(+)(in). It catalyses the reaction 1-(9Z-octadecenoyl)-sn-glycero-3-phosphoethanolamine(out) + H(+)(out) = 1-(9Z-octadecenoyl)-sn-glycero-3-phosphoethanolamine(in) + H(+)(in). It carries out the reaction 1-acyl-sn-glycero-3-phospho-(1'-sn-glycerol)(out) + H(+)(out) = 1-acyl-sn-glycero-3-phospho-(1'-sn-glycerol)(in) + H(+)(in). The catalysed reaction is 1-(9Z-octadecenoyl)-sn-glycero-3-phospho-(1'-sn-glycerol)(out) + H(+)(out) = 1-(9Z-octadecenoyl)-sn-glycero-3-phospho-(1'-sn-glycerol)(in) + H(+)(in). The enzyme catalyses a 1-O-(1Z-alkenyl)-sn-glycero-3-phosphocholine(out) + H(+)(out) = a 1-O-(1Z-alkenyl)-sn-glycero-3-phosphocholine(in) + H(+)(in). It catalyses the reaction 1-(1Z-hexadecenyl)-sn-glycero-3-phosphocholine(out) + H(+)(out) = 1-(1Z-hexadecenyl)-sn-glycero-3-phosphocholine(in) + H(+)(in). It carries out the reaction a 1-O-(1Z-alkenyl)-sn-glycero-3-phosphoethanolamine(out) + H(+)(out) = a 1-O-(1Z-alkenyl)-sn-glycero-3-phosphoethanolamine(in) + H(+)(in). The catalysed reaction is 1-O-(1Z-hexadecenyl)-sn-glycero-3-phosphoethanolamine(out) + H(+)(out) = 1-O-(1Z-hexadecenyl)-sn-glycero-3-phosphoethanolamine(in) + H(+)(in). Its function is as follows. Plays a critical role in the phospholipid salvage pathway from lysosomes to the cytosol. Mediates the rate-limiting, proton-dependent, lysosomal efflux of lysophospholipids, which can then be reacylated by acyltransferases in the endoplasmic reticulum to form phospholipids. Selective for zwitterionic headgroups such as lysophosphatidylcholine (LPC) and lysophosphatidylethanolamine (LPE), can also transport lysophosphatidylglycerol (LPG), but not other anionic lysophospholipids, sphingosine, nor sphingomyelin. Transports lysophospholipids with saturated, monounsaturated, and polyunsaturated fatty acids, such as 1-hexadecanoyl-sn-glycero-3-phosphocholine, 1-(9Z-octadecenoyl)-sn-glycero-3-phosphocholine and 1-(4Z,7Z,10Z,13Z,16Z,19Z-docosahexaenoyl)-sn-glycero-3-phosphocholine, respectively. Can also transport lysoplasmalogen (LPC with a fatty alcohol) such as 1-(1Z-hexadecenyl)-sn-glycero-3-phosphocholine. Essential player in lysosomal homeostasis. Crucial for cell survival under conditions of nutrient limitation. May be involved in necrotic or autophagic cell death. The polypeptide is Protein spinster homolog 1 (Spns1) (Mus musculus (Mouse)).